The following is a 474-amino-acid chain: uncharacterized protein (474 aa).

The span at 1-14 shows a compositional bias: polar residues; it reads MGSRYPSHQLSNGL. The interval 1–137 is disordered; that stretch reads MGSRYPSHQL…QSGGVTRQNS (137 aa). Position 45 is a phosphoserine (serine 45). Polar residues-rich tracts occupy residues 73–83, 97–113, and 125–137; these read RSGSFAGTAQS, SLAS…NSGP, and SGPQ…RQNS. Serine 169 is subject to Phosphoserine. 2 consecutive transmembrane segments (helical) span residues 210–230 and 236–256; these read VLWL…FILG and ILLV…IWNI.

Its subcellular location is the membrane. This is an uncharacterized protein from Arabidopsis thaliana (Mouse-ear cress).